We begin with the raw amino-acid sequence, 158 residues long: NAD(P)H-quinone oxidoreductase subunit J, chloroplastic (158 aa).

It belongs to the complex I 30 kDa subunit family. NDH is composed of at least 16 different subunits, 5 of which are encoded in the nucleus.

It is found in the plastid. It localises to the chloroplast thylakoid membrane. It carries out the reaction a plastoquinone + NADH + (n+1) H(+)(in) = a plastoquinol + NAD(+) + n H(+)(out). The catalysed reaction is a plastoquinone + NADPH + (n+1) H(+)(in) = a plastoquinol + NADP(+) + n H(+)(out). Its function is as follows. NDH shuttles electrons from NAD(P)H:plastoquinone, via FMN and iron-sulfur (Fe-S) centers, to quinones in the photosynthetic chain and possibly in a chloroplast respiratory chain. The immediate electron acceptor for the enzyme in this species is believed to be plastoquinone. Couples the redox reaction to proton translocation, and thus conserves the redox energy in a proton gradient. This chain is NAD(P)H-quinone oxidoreductase subunit J, chloroplastic, found in Ceratophyllum demersum (Rigid hornwort).